A 338-amino-acid chain; its full sequence is DNA-directed RNA polymerase subunit alpha (338 aa).

Residues 1–230 form an alpha N-terminal domain (alpha-NTD) region; the sequence is MRKITTSAYM…QQMSVFKGIL (230 aa). The interval 247–338 is alpha C-terminal domain (alpha-CTD); sequence FSKLLSSVED…ELKSQMSAKE (92 aa).

This sequence belongs to the RNA polymerase alpha chain family. In terms of assembly, homodimer. The RNAP catalytic core consists of 2 alpha, 1 beta, 1 beta' and 1 omega subunit. When a sigma factor is associated with the core the holoenzyme is formed, which can initiate transcription.

It catalyses the reaction RNA(n) + a ribonucleoside 5'-triphosphate = RNA(n+1) + diphosphate. In terms of biological role, DNA-dependent RNA polymerase catalyzes the transcription of DNA into RNA using the four ribonucleoside triphosphates as substrates. In Campylobacter concisus (strain 13826), this protein is DNA-directed RNA polymerase subunit alpha.